The sequence spans 203 residues: MYKPVSLFLFFLILAAAIHTNAVQSADEAISKAAVLIRQPWLNEVMTGITHLGASSFLLPLIVIIGAGMFFYRKTWDGLLMLLVFGTDRLLNKVLKEWIERVRPDFAPLVHESSFSFPSGHSMNAACVYPVIAYFLVKHLPFLSKHKKMVYIIAGVIAVLVGISRVYLGVHFVTDVLGGFSLGLLLFFLVKGFDEKIKRFRQK.

Met1 is a topological domain (cytoplasmic). The helical transmembrane segment at 2–17 (YKPVSLFLFFLILAAA) threads the bilayer. Residues 18–55 (IHTNAVQSADEAISKAAVLIRQPWLNEVMTGITHLGAS) lie on the Extracellular side of the membrane. The chain crosses the membrane as a helical span at residues 56-74 (SFLLPLIVIIGAGMFFYRK). The Cytoplasmic segment spans residues 75–78 (TWDG). A helical transmembrane segment spans residues 79 to 99 (LLMLLVFGTDRLLNKVLKEWI). Residues 96–104 (KEWIERVRP) are phosphatase sequence motif I. Over 100–119 (ERVRPDFAPLVHESSFSFPS) the chain is Extracellular. Positions 118–121 (PSGH) are phosphatase sequence motif II. A helical membrane pass occupies residues 120-139 (GHSMNAACVYPVIAYFLVKH). His121 serves as the catalytic Proton donors. Topologically, residues 140–146 (LPFLSKH) are cytoplasmic. Residues 147–167 (KKMVYIIAGVIAVLVGISRVY) traverse the membrane as a helical segment. The tract at residues 164-175 (SRVYLGVHFVTD) is phosphatase sequence motif III. Topologically, residues 168-172 (LGVHF) are extracellular. Residue His171 is the Nucleophile of the active site. Residues 173 to 196 (VTDVLGGFSLGLLLFFLVKGFDEK) traverse the membrane as a helical segment. Residues 197-203 (IKRFRQK) are Cytoplasmic-facing.

Belongs to the PA-phosphatase related phosphoesterase family.

It localises to the cell membrane. It catalyses the reaction a 1,2-diacyl-sn-glycero-3-phospho-(1'-sn-glycero-3'-phosphate) + H2O = a 1,2-diacyl-sn-glycero-3-phospho-(1'-sn-glycerol) + phosphate. Functionally, catalyzes the dephosphorylation of phosphatidylglycerophosphate (PGP) to phosphatidylglycerol. Also has undecaprenyl pyrophosphate phosphatase activity, required for the biosynthesis of the lipid carrier undecaprenyl phosphate. The polypeptide is Phosphatidylglycerophosphatase B (Bacillus subtilis (strain 168)).